Reading from the N-terminus, the 190-residue chain is Ferric nitrobindin-like protein (190 aa).

Positions Gly-20–Gly-26 match the GXWXGXG motif.

Belongs to the nitrobindin family.

The polypeptide is Ferric nitrobindin-like protein (Streptomyces griseus subsp. griseus (strain JCM 4626 / CBS 651.72 / NBRC 13350 / KCC S-0626 / ISP 5235)).